A 169-amino-acid chain; its full sequence is Fumarase E (169 aa).

The protein belongs to the MtlR/FumE family. In terms of assembly, homodimer.

It carries out the reaction (S)-malate = fumarate + H2O. Functionally, in vitro catalyzes the addition of water to fumarate, forming malate. Cannot catalyze the reverse reaction. Cannot use the cis-isomer maleate as substrate. The chain is Fumarase E from Shigella flexneri.